Here is a 226-residue protein sequence, read N- to C-terminus: Transmembrane protein 204 (226 aa).

The Cytoplasmic portion of the chain corresponds to Met1–Lys5. The chain crosses the membrane as a helical span at residues Leu6–Phe26. At Thr27–Asn103 the chain is on the extracellular side. A helical membrane pass occupies residues Leu104 to Leu124. Residues Pro125 to Glu136 lie on the Cytoplasmic side of the membrane. A helical membrane pass occupies residues Ala137 to Tyr157. Over Arg158–Tyr170 the chain is Extracellular. Asn164 is a glycosylation site (N-linked (GlcNAc...) asparagine). The chain crosses the membrane as a helical span at residues Leu171 to Leu191. Residues His192–Cys226 lie on the Cytoplasmic side of the membrane.

Its subcellular location is the cell junction. The protein localises to the adherens junction. The protein resides in the cell membrane. Functionally, can influence paracellular permeability. Appears to be involved in cell-cell interactions through adherens. The sequence is that of Transmembrane protein 204 (Tmem204) from Rattus norvegicus (Rat).